Reading from the N-terminus, the 224-residue chain is PKHD-type hydroxylase Sbal195_0750 (224 aa).

A Fe2OG dioxygenase domain is found at 78–176 (QFYPPLFNRY…RTAAFMWLQS (99 aa)). The Fe cation site is built by H96, D98, and H157. R167 lines the 2-oxoglutarate pocket.

It depends on Fe(2+) as a cofactor. L-ascorbate is required as a cofactor.

This chain is PKHD-type hydroxylase Sbal195_0750, found in Shewanella baltica (strain OS195).